The following is a 200-amino-acid chain: NADH-quinone oxidoreductase chain 10 (200 aa).

5 consecutive transmembrane segments (helical) span residues 2–22 (MTFA…MVVI), 26–46 (PVHS…LFVL), 51–71 (FVAM…FLFV), 90–110 (LPLA…AFSG), and 144–164 (VLMF…AIVL).

This sequence belongs to the complex I subunit 6 family. As to quaternary structure, NDH-1 is composed of at least 14 different subunits, Nqo1 to Nqo14. The complex has a L-shaped structure, with the hydrophobic arm (subunits Nqo7, Nqo8, Nqo10 to Nqo14) embedded in the inner membrane and the hydrophilic peripheral arm (subunits Nqo1 to Nqo6, Nqo9) protruding into the bacterial cytoplasm. The hydrophilic domain contains all the redox centers.

The protein localises to the cell inner membrane. It carries out the reaction a quinone + NADH + 5 H(+)(in) = a quinol + NAD(+) + 4 H(+)(out). Functionally, NDH-1 shuttles electrons from NADH, via FMN and iron-sulfur (Fe-S) centers, to quinones in the respiratory chain. The immediate electron acceptor for the enzyme in this species is believed to be ubiquinone. Couples the redox reaction to proton translocation (for every two electrons transferred, four hydrogen ions are translocated across the cytoplasmic membrane), and thus conserves the redox energy in a proton gradient. The polypeptide is NADH-quinone oxidoreductase chain 10 (Paracoccus denitrificans).